A 394-amino-acid polypeptide reads, in one-letter code: DNA primase large subunit PriL (394 aa).

Residues cysteine 231, cysteine 340, cysteine 351, and cysteine 357 each coordinate [4Fe-4S] cluster.

The protein belongs to the eukaryotic-type primase large subunit family. In terms of assembly, heterodimer of a small subunit (PriS) and a large subunit (PriL). Requires [4Fe-4S] cluster as cofactor.

Functionally, regulatory subunit of DNA primase, an RNA polymerase that catalyzes the synthesis of short RNA molecules used as primers for DNA polymerase during DNA replication. Stabilizes and modulates the activity of the small subunit, increasing the rate of DNA synthesis, and conferring RNA synthesis capability. The DNA polymerase activity may enable DNA primase to also catalyze primer extension after primer synthesis. May also play a role in DNA repair. The sequence is that of DNA primase large subunit PriL from Pyrococcus horikoshii (strain ATCC 700860 / DSM 12428 / JCM 9974 / NBRC 100139 / OT-3).